The following is a 194-amino-acid chain: Fe/S biogenesis protein NfuA (194 aa).

[4Fe-4S] cluster-binding residues include Cys152 and Cys155.

Belongs to the NfuA family. In terms of assembly, homodimer. It depends on [4Fe-4S] cluster as a cofactor.

Functionally, involved in iron-sulfur cluster biogenesis. Binds a 4Fe-4S cluster, can transfer this cluster to apoproteins, and thereby intervenes in the maturation of Fe/S proteins. Could also act as a scaffold/chaperone for damaged Fe/S proteins. The sequence is that of Fe/S biogenesis protein NfuA from Pseudomonas entomophila (strain L48).